We begin with the raw amino-acid sequence, 330 residues long: Putative aminohydrolase AF_1775 (330 aa).

Zn(2+) is bound by residues His-54, His-56, His-181, and Asp-253.

This sequence belongs to the metallo-dependent hydrolases superfamily. ATZ/TRZ family.

The protein is Putative aminohydrolase AF_1775 of Archaeoglobus fulgidus (strain ATCC 49558 / DSM 4304 / JCM 9628 / NBRC 100126 / VC-16).